The following is a 593-amino-acid chain: Cyclin-dependent kinase-like 3 (593 aa).

The Protein kinase domain maps to 4–286 (YETLGKVGEG…STDLLHHDYF (283 aa)). ATP is bound by residues 10–18 (VGEGSYGTV) and Lys33. The short motif at 45 to 51 (KIATREI) is the [NKR]KIAxRE element. Asp125 functions as the Proton acceptor in the catalytic mechanism. Residue Thr158 is modified to Phosphothreonine. Tyr160 carries the post-translational modification Phosphotyrosine. The span at 368 to 403 (GKGDVPDLKKTESEGEHRQQGTAEDTHPTSLDRKPS) shows a compositional bias: basic and acidic residues. A disordered region spans residues 368–512 (GKGDVPDLKK…NDQIASGNKR (145 aa)). Residues 436 to 452 (NLTSSNLLAANPSSNLS) show a composition bias toward low complexity. Composition is skewed to polar residues over residues 468–491 (SSQT…QVQT) and 499–508 (RTGQNDQIAS).

This sequence belongs to the protein kinase superfamily. CMGC Ser/Thr protein kinase family. CDC2/CDKX subfamily. Highly expressed in brain, and to a lower extent in heart and testis.

The protein localises to the nucleus. The protein resides in the cytoplasm. It catalyses the reaction L-seryl-[protein] + ATP = O-phospho-L-seryl-[protein] + ADP + H(+). It carries out the reaction L-threonyl-[protein] + ATP = O-phospho-L-threonyl-[protein] + ADP + H(+). The sequence is that of Cyclin-dependent kinase-like 3 from Rattus norvegicus (Rat).